Here is a 219-residue protein sequence, read N- to C-terminus: MKFFVDSADVAAIAELNALGMVDGVTTNPSLILKSGRNILEVTREICDLVAGPVSAEVVAAKADDMIEEGRKLAEIAPNITVKVPLTWDGLKACKVLTDEGRMVNVTLCFSVNQALLAAKAGATFISPFIGRLDDINLDGLELIADIRQVYDNYDFQTEVLAASIRTPNHVAQCARIGADVITAPPAVIKGLANHVLTDKGLEMFDADWAKTGQTILSL.

Lysine 83 acts as the Schiff-base intermediate with substrate in catalysis.

This sequence belongs to the transaldolase family. Type 3B subfamily.

The protein localises to the cytoplasm. The enzyme catalyses D-sedoheptulose 7-phosphate + D-glyceraldehyde 3-phosphate = D-erythrose 4-phosphate + beta-D-fructose 6-phosphate. It participates in carbohydrate degradation; pentose phosphate pathway; D-glyceraldehyde 3-phosphate and beta-D-fructose 6-phosphate from D-ribose 5-phosphate and D-xylulose 5-phosphate (non-oxidative stage): step 2/3. Functionally, transaldolase is important for the balance of metabolites in the pentose-phosphate pathway. The protein is Probable transaldolase of Cereibacter sphaeroides (strain ATCC 17025 / ATH 2.4.3) (Rhodobacter sphaeroides).